Reading from the N-terminus, the 449-residue chain is BPI fold-containing family B member 6 (449 aa).

The first 18 residues, M1–A18, serve as a signal peptide directing secretion. N115 carries an N-linked (GlcNAc...) asparagine glycan. C138 and C172 are joined by a disulfide.

It belongs to the BPI/LBP/Plunc superfamily. BPI/LBP family.

It localises to the secreted. The chain is BPI fold-containing family B member 6 (Bpifb6) from Mus musculus (Mouse).